We begin with the raw amino-acid sequence, 154 residues long: UPF0260 protein HI_1355 (154 aa).

Belongs to the UPF0260 family.

The protein is UPF0260 protein HI_1355 of Haemophilus influenzae (strain ATCC 51907 / DSM 11121 / KW20 / Rd).